The following is a 386-amino-acid chain: Delta(7)-sterol 5(6)-desaturase (386 aa).

Transmembrane regions (helical) follow at residues valine 119–tyrosine 139, isoleucine 172–phenylalanine 192, and alanine 206–histidine 226. One can recognise a Fatty acid hydroxylase domain in the interval phenylalanine 214–asparagine 337. The short motif at histidine 226–histidine 230 is the Histidine box-1 element. A Histidine box-2 motif is present at residues histidine 239–histidine 243. Residues proline 272 to tryptophan 292 form a helical membrane-spanning segment. A Histidine box-3 motif is present at residues histidine 314–histidine 318.

It belongs to the sterol desaturase family. Requires Fe cation as cofactor.

The protein localises to the endoplasmic reticulum membrane. It catalyses the reaction a Delta(7)-sterol + 2 Fe(II)-[cytochrome b5] + O2 + 2 H(+) = a Delta(5),Delta(7)-sterol + 2 Fe(III)-[cytochrome b5] + 2 H2O. It participates in steroid metabolism; ergosterol biosynthesis; ergosterol from zymosterol: step 3/5. Its function is as follows. Catalyzes the introduction of a C-5 double bond in the B ring of ergosterol. May contribute to the regulation of ergosterol biosynthesis. The sequence is that of Delta(7)-sterol 5(6)-desaturase (ERG3) from Candida dubliniensis (strain CD36 / ATCC MYA-646 / CBS 7987 / NCPF 3949 / NRRL Y-17841) (Yeast).